A 152-amino-acid chain; its full sequence is Protein FYV5 (152 aa).

The next 5 membrane-spanning stretches (helical) occupy residues 26–46, 56–76, 82–102, 106–126, and 127–147; these read IISI…RICS, LISS…SCVL, VGII…VLFL, LIDL…TPFF, and FMLH…YLII.

It is found in the cell membrane. Its subcellular location is the secreted. The protein resides in the cell wall. Functionally, involved in maintaining an adequate ionic strength homeostasis of the cellular aqueous environment, necessary for normal growth rate. Required for survival upon exposure to K1 killer toxin and hence plays a role in cell wall glucan synthesis. Required for dithiothreitol (DTT) resistance. Involved in cell cycle progression. The polypeptide is Protein FYV5 (FYV5) (Saccharomyces cerevisiae (strain ATCC 204508 / S288c) (Baker's yeast)).